Here is a 427-residue protein sequence, read N- to C-terminus: Glutamate-1-semialdehyde 2,1-aminomutase 2 (427 aa).

Lysine 267 bears the N6-(pyridoxal phosphate)lysine mark.

This sequence belongs to the class-III pyridoxal-phosphate-dependent aminotransferase family. HemL subfamily. As to quaternary structure, homodimer. Pyridoxal 5'-phosphate is required as a cofactor.

Its subcellular location is the cytoplasm. It catalyses the reaction (S)-4-amino-5-oxopentanoate = 5-aminolevulinate. Its pathway is porphyrin-containing compound metabolism; protoporphyrin-IX biosynthesis; 5-aminolevulinate from L-glutamyl-tRNA(Glu): step 2/2. The protein is Glutamate-1-semialdehyde 2,1-aminomutase 2 of Staphylococcus saprophyticus subsp. saprophyticus (strain ATCC 15305 / DSM 20229 / NCIMB 8711 / NCTC 7292 / S-41).